The sequence spans 143 residues: Large ribosomal subunit protein uL11 (143 aa).

This sequence belongs to the universal ribosomal protein uL11 family. In terms of assembly, part of the ribosomal stalk of the 50S ribosomal subunit. Interacts with L10 and the large rRNA to form the base of the stalk. L10 forms an elongated spine to which L12 dimers bind in a sequential fashion forming a multimeric L10(L12)X complex. One or more lysine residues are methylated.

Functionally, forms part of the ribosomal stalk which helps the ribosome interact with GTP-bound translation factors. This is Large ribosomal subunit protein uL11 from Polynucleobacter necessarius subsp. necessarius (strain STIR1).